A 616-amino-acid polypeptide reads, in one-letter code: ATP-dependent zinc metalloprotease FtsH (616 aa).

The Cytoplasmic portion of the chain corresponds to 1-8 (MRNLFKTA). Residues 9 to 29 (TIYILIALVILLLVDIFSGGL) form a helical membrane-spanning segment. The Extracellular portion of the chain corresponds to 30–114 (SYNQFFSNLS…VTKEPPQVPW (85 aa)). A helical transmembrane segment spans residues 115–135 (WLSTFLPMLIFAGLMIFVWIF). The Cytoplasmic segment spans residues 136–616 (MLQQTQGGGS…VFEDAQPQLV (481 aa)). 208–215 (GPPGTGKT) is an ATP binding site. His430 is a binding site for Zn(2+). Glu431 is an active-site residue. Zn(2+)-binding residues include His434 and Asp506.

The protein in the central section; belongs to the AAA ATPase family. It in the C-terminal section; belongs to the peptidase M41 family. As to quaternary structure, homohexamer. It depends on Zn(2+) as a cofactor.

The protein localises to the cell membrane. Functionally, acts as a processive, ATP-dependent zinc metallopeptidase for both cytoplasmic and membrane proteins. Plays a role in the quality control of integral membrane proteins. This chain is ATP-dependent zinc metalloprotease FtsH, found in Caldicellulosiruptor bescii (strain ATCC BAA-1888 / DSM 6725 / KCTC 15123 / Z-1320) (Anaerocellum thermophilum).